Here is a 122-residue protein sequence, read N- to C-terminus: ATP-dependent Clp protease adapter protein ClpS (122 aa).

Positions 1 to 33 (MHAPSQIRLTFNQDHPEPHEHEDEGAGLAVQES) are disordered. Over residues 14-24 (DHPEPHEHEDE) the composition is skewed to basic and acidic residues.

The protein belongs to the ClpS family. Binds to the N-terminal domain of the chaperone ClpA.

Functionally, involved in the modulation of the specificity of the ClpAP-mediated ATP-dependent protein degradation. The sequence is that of ATP-dependent Clp protease adapter protein ClpS from Pseudomonas aeruginosa (strain ATCC 15692 / DSM 22644 / CIP 104116 / JCM 14847 / LMG 12228 / 1C / PRS 101 / PAO1).